Consider the following 594-residue polypeptide: Spermidine/putrescine import ATP-binding protein PotA (594 aa).

The region spanning 24–435 (IEIKKINKTY…PANNWVANFI (412 aa)) is the ABC transporter domain. 57-64 (GPSGCGKT) serves as a coordination point for ATP. An insert region spans residues 125 to 304 (RKPIENVSAD…EWFDKKKLTR (180 aa)).

It belongs to the ABC transporter superfamily. Spermidine/putrescine importer (TC 3.A.1.11.1) family. As to quaternary structure, the complex is composed of two ATP-binding proteins (PotA), two transmembrane proteins (PotB and PotC) and a solute-binding protein (PotD).

It localises to the cell membrane. The catalysed reaction is ATP + H2O + polyamine-[polyamine-binding protein]Side 1 = ADP + phosphate + polyamineSide 2 + [polyamine-binding protein]Side 1.. Part of the ABC transporter complex PotABCD involved in spermidine/putrescine import. Responsible for energy coupling to the transport system. This chain is Spermidine/putrescine import ATP-binding protein PotA, found in Malacoplasma penetrans (strain HF-2) (Mycoplasma penetrans).